Consider the following 249-residue polypeptide: MAADESPASPSELSECFSAEDYAAESLAADLDPWITFDARKTPRAEFSSWLQSHRPSSVSRYGDGEAGAGPVGWIAVRGPDYSEQSGDVEGLQDSWETLLTSGRSVSFQNIRELALNHSVLDGKWLMHLDTGFKVDRAWESIARATVLEGKIWSAKVSPRDPSSNSRHVICVYNQNFTDEEQVVRLDSAIRAAGVKCVLYYKPDVYTYLGIYRNNRWKLCPTIYESMFDLESVPRRSHILNKVTNLELS.

It belongs to the UPF0696 family.

The polypeptide is UPF0696 protein C11orf68 homolog (Danio rerio (Zebrafish)).